Here is a 439-residue protein sequence, read N- to C-terminus: GTPase Obg (439 aa).

The region spanning 5–164 (TDFFDQATIV…LTLELELKML (160 aa)) is the Obg domain. Residues 165–335 (ADVGLVGFPN…LLQRVAELLR (171 aa)) form the OBG-type G domain. GTP contacts are provided by residues 171–178 (GFPNAGKS), 196–200 (FTTLT), 217–220 (DIPG), 287–290 (NKAD), and 316–318 (SAA). Positions 178 and 198 each coordinate Mg(2+). The tract at residues 337–359 (DPPPQRDPVDPDEPPLEWPLPPV) is disordered. An OCT domain is found at 356–433 (LPPVDENAFT…IGRAELVWDD (78 aa)).

This sequence belongs to the TRAFAC class OBG-HflX-like GTPase superfamily. OBG GTPase family. In terms of assembly, monomer. Mg(2+) serves as cofactor.

It localises to the cytoplasm. An essential GTPase which binds GTP, GDP and possibly (p)ppGpp with moderate affinity, with high nucleotide exchange rates and a fairly low GTP hydrolysis rate. Plays a role in control of the cell cycle, stress response, ribosome biogenesis and in those bacteria that undergo differentiation, in morphogenesis control. The protein is GTPase Obg of Chloroflexus aggregans (strain MD-66 / DSM 9485).